Reading from the N-terminus, the 936-residue chain is MutS protein homolog 4 (936 aa).

Disordered regions lie at residues 1–83 (MLRP…AQGS) and 103–133 (GASS…SGYK). Residues 7 to 20 (SSTSPSAPAVSPSS) are compositionally biased toward low complexity. Residues 35–55 (LQETPQSRPSVQVVSASTCPG) are compositionally biased toward polar residues. Residue 680 to 687 (GPNMSGKS) participates in ATP binding.

The protein belongs to the DNA mismatch repair MutS family. As to quaternary structure, heterooligomer of MSH4 and MSH5. In terms of tissue distribution, highly expressed in testis. Also expressed in the ovary.

It localises to the chromosome. Functionally, involved in meiotic recombination. Required for reciprocal recombination and proper segregation of homologous chromosomes at meiosis. The protein is MutS protein homolog 4 (MSH4) of Homo sapiens (Human).